A 416-amino-acid polypeptide reads, in one-letter code: Major royal jelly protein 8 (416 aa).

The signal sequence occupies residues 1-16 (MIRWLLLMYLGITCQG). N-linked (GlcNAc...) asparagine glycans are attached at residues asparagine 24, asparagine 58, asparagine 93, asparagine 115, asparagine 158, asparagine 175, asparagine 196, and asparagine 215.

Belongs to the major royal jelly protein family. Expressed at very low levels in the hypopharyngeal glands of worker honey bees (at protein level). Secreted into bee venom in the sting apparatus (at protein level). Expressed in the spermatheca of adult queen bees (at protein level); expression levels are higher in mated queens than in virgin queens. Along with Mrjp9 expressed at very low levels in the head of worker bees compared to other major royal jelly proteins.

Its subcellular location is the secreted. Functionally, component of bee sting venom. Component of royal jelly, a substance produced in the hypopharyngeal gland containing proteins, free amino acids, fatty acids, sugars and other nutrients, which is fed to developing larvae by worker nurse bees; may be present only at trace levels. All larvae are fed some royal jelly (also known as worker jelly) early in their development but it forms the principal source of nutrition for larvae destined to become queen bees. Produced in the spermatheca of adult queen bees, along with other major royal jelly proteins, where it may act as a nutrient supply for sperm stored by mated queens, or be involved in energy metabolism. The polypeptide is Major royal jelly protein 8 (Apis mellifera (Honeybee)).